The chain runs to 680 residues: DNA ligase (680 aa).

NAD(+) contacts are provided by residues 32-36 (DAVYD), 81-82 (SL), and E115. Residue K117 is the N6-AMP-lysine intermediate of the active site. The NAD(+) site is built by R138, E175, K291, and K315. Residues C409, C412, C427, and C432 each coordinate Zn(2+). The 81-residue stretch at 600–680 (ASEQHLKGLT…RLQAMLKDSP (81 aa)) folds into the BRCT domain.

This sequence belongs to the NAD-dependent DNA ligase family. LigA subfamily. Requires Mg(2+) as cofactor. The cofactor is Mn(2+).

The catalysed reaction is NAD(+) + (deoxyribonucleotide)n-3'-hydroxyl + 5'-phospho-(deoxyribonucleotide)m = (deoxyribonucleotide)n+m + AMP + beta-nicotinamide D-nucleotide.. Its function is as follows. DNA ligase that catalyzes the formation of phosphodiester linkages between 5'-phosphoryl and 3'-hydroxyl groups in double-stranded DNA using NAD as a coenzyme and as the energy source for the reaction. It is essential for DNA replication and repair of damaged DNA. The protein is DNA ligase of Synechococcus sp. (strain CC9902).